A 955-amino-acid chain; its full sequence is Glycine dehydrogenase (decarboxylating) (955 aa).

Lys702 is subject to N6-(pyridoxal phosphate)lysine.

It belongs to the GcvP family. As to quaternary structure, the glycine cleavage system is composed of four proteins: P, T, L and H. Requires pyridoxal 5'-phosphate as cofactor.

It carries out the reaction N(6)-[(R)-lipoyl]-L-lysyl-[glycine-cleavage complex H protein] + glycine + H(+) = N(6)-[(R)-S(8)-aminomethyldihydrolipoyl]-L-lysyl-[glycine-cleavage complex H protein] + CO2. Its function is as follows. The glycine cleavage system catalyzes the degradation of glycine. The P protein binds the alpha-amino group of glycine through its pyridoxal phosphate cofactor; CO(2) is released and the remaining methylamine moiety is then transferred to the lipoamide cofactor of the H protein. The chain is Glycine dehydrogenase (decarboxylating) from Stenotrophomonas maltophilia (strain R551-3).